Here is a 336-residue protein sequence, read N- to C-terminus: Fructose-1,6-bisphosphatase class 1 (336 aa).

Mg(2+) contacts are provided by glutamate 92, aspartate 115, leucine 117, and aspartate 118. Substrate is bound by residues aspartate 118–serine 121, asparagine 211, tyrosine 244, tyrosine 262–tyrosine 264, and lysine 274. Glutamate 280 contacts Mg(2+).

The protein belongs to the FBPase class 1 family. As to quaternary structure, homotetramer. Requires Mg(2+) as cofactor.

It is found in the cytoplasm. The enzyme catalyses beta-D-fructose 1,6-bisphosphate + H2O = beta-D-fructose 6-phosphate + phosphate. The protein operates within carbohydrate biosynthesis; gluconeogenesis. The chain is Fructose-1,6-bisphosphatase class 1 from Aliivibrio fischeri (strain MJ11) (Vibrio fischeri).